We begin with the raw amino-acid sequence, 150 residues long: Large ribosomal subunit protein bL9 (150 aa).

It belongs to the bacterial ribosomal protein bL9 family.

Binds to the 23S rRNA. The sequence is that of Large ribosomal subunit protein bL9 from Ralstonia pickettii (strain 12J).